Consider the following 380-residue polypeptide: MWRSLGLALALCLLPYGGAESQGQSSACYKAPEWYIGDQNPMLNSEGKVTVVALLQASUYLCLLQASRLEDLRIKLESQGYFNISYIVVNHQGSPSQLKHSHLKKQVSEHIAVYRQEEDGIDVWTLLNGNKDDFLIYDRCGRLVYHLGLPYSFLTFPYVEEAIKIAYCEERCGNCNLTSLEDEDFCKTVTSATANKTAEPSEAHSHHKHHNKHGQEHLGSSKPSENQQPGPSETTLPPSGLHHHHRHRGQHRQGHLESUDTTASEGLHLSLAQRKLURRGCINQLLCKLSKESEAAPSSCCCHCRHLIFEKSGSAIAUQCAENLPSLCSUQGLFAEEKVTESCQCRSPPAAUQNQPMNPMEANPNUSUDNQTRKUKUHSN.

The N-terminal stretch at 1–19 (MWRSLGLALALCLLPYGGA) is a signal peptide. Sec-59 is a non-standard amino acid (selenocysteine). Asn-83, Asn-176, and Asn-195 each carry an N-linked (GlcNAc...) asparagine glycan. The segment at 196 to 257 (KTAEPSEAHS…RGQHRQGHLE (62 aa)) is disordered. The span at 221-237 (SKPSENQQPGPSETTLP) shows a compositional bias: polar residues. Residues 241 to 253 (LHHHHRHRGQHRQ) are compositionally biased toward basic residues. Residue Sec-259 is a non-standard amino acid, selenocysteine. Residue Ser-264 is modified to Phosphoserine. Residues Sec-277, Sec-318, Sec-330, and Sec-352 are each a non-standard amino acid (selenocysteine). Residues 346–380 (RSPPAAUQNQPMNPMEANPNUSUDNQTRKUKUHSN) form a disordered region. The span at 348 to 360 (PPAAUQNQPMNPM) shows a compositional bias: low complexity. The N-linked (GlcNAc...) asparagine glycan is linked to Asn-365. 2 non-standard amino acids (selenocysteine) are found at residues Sec-366 and Sec-368. The N-linked (GlcNAc...) asparagine glycan is linked to Asn-370. 2 non-standard amino acids (selenocysteine) are found at residues Sec-375 and Sec-377.

Belongs to the selenoprotein P family. Post-translationally, phosphorylation sites are present in the extracellular medium. As to expression, in the kidney, expressed in the cortex with no expression observed in the medulla (at protein level). Expressed by the liver and secreted in plasma.

It localises to the secreted. Functionally, might be responsible for some of the extracellular antioxidant defense properties of selenium or might be involved in the transport of selenium. May supply selenium to tissues such as brain and testis. This chain is Selenoprotein P, found in Mus musculus (Mouse).